Reading from the N-terminus, the 160-residue chain is uncharacterized protein (160 aa).

Residues 7 to 151 enclose the N-acetyltransferase domain; the sequence is LLINFKTLEE…NPYIWHPDMD (145 aa).

This is an uncharacterized protein from Bacillus velezensis (strain DSM 23117 / BGSC 10A6 / LMG 26770 / FZB42) (Bacillus amyloliquefaciens subsp. plantarum).